A 173-amino-acid chain; its full sequence is Crossover junction endodeoxyribonuclease RuvC (173 aa).

Active-site residues include aspartate 8, glutamate 67, and aspartate 139. Residues aspartate 8, glutamate 67, and aspartate 139 each coordinate Mg(2+).

It belongs to the RuvC family. As to quaternary structure, homodimer which binds Holliday junction (HJ) DNA. The HJ becomes 2-fold symmetrical on binding to RuvC with unstacked arms; it has a different conformation from HJ DNA in complex with RuvA. In the full resolvosome a probable DNA-RuvA(4)-RuvB(12)-RuvC(2) complex forms which resolves the HJ. Requires Mg(2+) as cofactor.

It is found in the cytoplasm. The catalysed reaction is Endonucleolytic cleavage at a junction such as a reciprocal single-stranded crossover between two homologous DNA duplexes (Holliday junction).. Its function is as follows. The RuvA-RuvB-RuvC complex processes Holliday junction (HJ) DNA during genetic recombination and DNA repair. Endonuclease that resolves HJ intermediates. Cleaves cruciform DNA by making single-stranded nicks across the HJ at symmetrical positions within the homologous arms, yielding a 5'-phosphate and a 3'-hydroxyl group; requires a central core of homology in the junction. The consensus cleavage sequence is 5'-(A/T)TT(C/G)-3'. Cleavage occurs on the 3'-side of the TT dinucleotide at the point of strand exchange. HJ branch migration catalyzed by RuvA-RuvB allows RuvC to scan DNA until it finds its consensus sequence, where it cleaves and resolves the cruciform DNA. Plays a role in recovery after DNA ADP-ribosylation, probably via replication fork reversal. The polypeptide is Crossover junction endodeoxyribonuclease RuvC (Escherichia coli O127:H6 (strain E2348/69 / EPEC)).